A 300-amino-acid chain; its full sequence is Ribosomal protein L11 methyltransferase (300 aa).

S-adenosyl-L-methionine is bound by residues T152, G173, D195, and N234.

This sequence belongs to the methyltransferase superfamily. PrmA family.

The protein resides in the cytoplasm. The catalysed reaction is L-lysyl-[protein] + 3 S-adenosyl-L-methionine = N(6),N(6),N(6)-trimethyl-L-lysyl-[protein] + 3 S-adenosyl-L-homocysteine + 3 H(+). Its function is as follows. Methylates ribosomal protein L11. This is Ribosomal protein L11 methyltransferase from Burkholderia pseudomallei (strain K96243).